Reading from the N-terminus, the 291-residue chain is Trimeric intracellular cation channel type B (291 aa).

Residues 1 to 16 lie on the Lumenal side of the membrane; it reads MEYPWDDLTLAFSRTS. Residues 17 to 33 traverse the membrane as a helical segment; that stretch reads MFPFFDIAHYLVSVMAL. Residues 34–47 are Cytoplasmic-facing; it reads KQRPGAVAAAWSNP. Residues 48 to 69 form a helical membrane-spanning segment; it reads LSSWLSAMLHCFGGGILSCILL. Residues 70-80 lie on the Lumenal side of the membrane; it reads AEPPLKFLTNH. Residues 81 to 99 form a helical membrane-spanning segment; the sequence is TNILLASSIWYIVFFCPRD. Residues 100–103 lie on the Cytoplasmic side of the membrane; it reads LVSQ. Residues 104-122 traverse the membrane as a helical segment; sequence GYSYQPIQLLAAGMKEVTR. Residues lysine 118 and arginine 122 each contribute to the a 1,2-diacyl-sn-glycero-3-phospho-(1D-myo-inositol-4,5-bisphosphate) site. Residues 123–138 lie on the Lumenal side of the membrane; sequence TWKIVGGVAHANGYYR. A helical transmembrane segment spans residues 139 to 156; the sequence is NGWIVMIAVGWARGAGGA. At 157–179 the chain is on the cytoplasmic side; it reads IITACEQLLKGDWKPEGDEWLKM. The chain crosses the membrane as a helical span at residues 180–197; the sequence is SFPCKVTLLGSIMFTFQH. Topologically, residues 198–206 are lumenal; sequence TRHLAISKH. Residues 207–225 traverse the membrane as a helical segment; the sequence is DLMFLYTIFLVTIKVTMMM. Topologically, residues 226–291 are cytoplasmic; sequence TKDAAVTLTP…SAKRHAKKED (66 aa). Residues 254–291 are disordered; sequence LSEKKAEVKPSSNGSASSASKRGTEPPSSAKRHAKKED. A compositionally biased stretch (low complexity) spans 264–273; the sequence is SSNGSASSAS.

Belongs to the TMEM38 family. In terms of assembly, homotrimer; conformation seems to be controled by binding to diacylglycerol (DAG).

Its subcellular location is the endoplasmic reticulum membrane. It carries out the reaction K(+)(in) = K(+)(out). Channel activity is activated by increased cytosolic Ca(2+) levels and blocked by luminal high Ca(2+) levels. Intracellular monovalent cation channel required for maintenance of rapid intracellular calcium release. Acts as a potassium counter-ion channel that functions in synchronization with calcium release from intracellular stores. Activated by increased cytosolic Ca(2+) levels. The protein is Trimeric intracellular cation channel type B (Tmem38b) of Rattus norvegicus (Rat).